The following is a 172-amino-acid chain: Ribosome maturation factor RimM (172 aa).

Residues 95-168 (DEGEFYYHQI…RVDVAIMEGL (74 aa)) enclose the PRC barrel domain.

It belongs to the RimM family. As to quaternary structure, binds ribosomal protein uS19.

It localises to the cytoplasm. Functionally, an accessory protein needed during the final step in the assembly of 30S ribosomal subunit, possibly for assembly of the head region. Essential for efficient processing of 16S rRNA. May be needed both before and after RbfA during the maturation of 16S rRNA. It has affinity for free ribosomal 30S subunits but not for 70S ribosomes. The sequence is that of Ribosome maturation factor RimM from Streptococcus uberis (strain ATCC BAA-854 / 0140J).